The primary structure comprises 1026 residues: Multidrug resistance protein MdtC (1026 aa).

Helical transmembrane passes span 15–35, 333–353, 360–380, 387–407, 431–451, 463–483, 528–548, 853–873, 897–917, 953–973, and 984–1004; these read ILIAAAITLCGILGFRLLPVA, EVEETLAISVALVILVVFLFL, LIPAVAVPVSLIGTFAAMYLC, LSLMALTIATGFVVDDAIVVL, VGFTVISMSLSLVAVFLPLLL, FAVTLSVAIGISLVVSLTLTP, LVGVVFLGTVALNIWLYIAIP, LILIVAAIATVYIVLEILYES, LFNAPFSLIALIGIMLLIGIV, PIMMTTLAALFGALPLVLSGG, and ITIVGGLVMSQLLTLYTTPVV.

Belongs to the resistance-nodulation-cell division (RND) (TC 2.A.6) family. MdtC subfamily. As to quaternary structure, part of a tripartite efflux system composed of MdtA, MdtB and MdtC. MdtC forms a heteromultimer with MdtB.

Its subcellular location is the cell inner membrane. This chain is Multidrug resistance protein MdtC, found in Salmonella paratyphi A (strain ATCC 9150 / SARB42).